The sequence spans 266 residues: Protein YABBY 5 (266 aa).

Residues 1–22 form a disordered region; the sequence is MMSSAPETFSLDHLSQHQQQQP. The C4-type zinc finger occupies 36–63; the sequence is CNFCDTILAVGVPCSSLFKTVTVRCGHC. Low complexity predominate over residues 119–141; the sequence is ASPNVSSITSSNSSCANNAPATS. Positions 119–174 are disordered; it reads ASPNVSSITSSNSSCANNAPATSMASAANKATQREPQQPKNAPSANRTSEKRQRVP. The span at 142 to 165 shows a compositional bias: polar residues; the sequence is MASAANKATQREPQQPKNAPSANR.

It belongs to the YABBY family.

The protein resides in the nucleus. May be involved in leaf cell growth and differentiation, rather than abaxial cell fate determination. In Oryza sativa subsp. indica (Rice), this protein is Protein YABBY 5 (YAB5).